The sequence spans 193 residues: Iron-sulfur flavoprotein MJ1083 (193 aa).

The [4Fe-4S] cluster site is built by C47, C50, C53, and C59.

It belongs to the SsuE family. Isf subfamily. In terms of assembly, homodimer. The cofactor is FMN. Requires [4Fe-4S] cluster as cofactor.

Redox-active protein probably involved in electron transport. The protein is Iron-sulfur flavoprotein MJ1083 of Methanocaldococcus jannaschii (strain ATCC 43067 / DSM 2661 / JAL-1 / JCM 10045 / NBRC 100440) (Methanococcus jannaschii).